A 731-amino-acid polypeptide reads, in one-letter code: 1,4-alpha-glucan branching enzyme GlgB (731 aa).

Catalysis depends on aspartate 412, which acts as the Nucleophile. The active-site Proton donor is glutamate 465.

This sequence belongs to the glycosyl hydrolase 13 family. GlgB subfamily. Monomer.

The enzyme catalyses Transfers a segment of a (1-&gt;4)-alpha-D-glucan chain to a primary hydroxy group in a similar glucan chain.. Its pathway is glycan biosynthesis; glycogen biosynthesis. Catalyzes the formation of the alpha-1,6-glucosidic linkages in glycogen by scission of a 1,4-alpha-linked oligosaccharide from growing alpha-1,4-glucan chains and the subsequent attachment of the oligosaccharide to the alpha-1,6 position. This Bordetella bronchiseptica (strain ATCC BAA-588 / NCTC 13252 / RB50) (Alcaligenes bronchisepticus) protein is 1,4-alpha-glucan branching enzyme GlgB.